The sequence spans 163 residues: Putative pre-16S rRNA nuclease (163 aa).

Belongs to the YqgF nuclease family.

The protein localises to the cytoplasm. In terms of biological role, could be a nuclease involved in processing of the 5'-end of pre-16S rRNA. The polypeptide is Putative pre-16S rRNA nuclease (Rhizobium leguminosarum bv. trifolii (strain WSM2304)).